We begin with the raw amino-acid sequence, 239 residues long: Sugar fermentation stimulation protein homolog (239 aa).

Belongs to the SfsA family.

The chain is Sugar fermentation stimulation protein homolog from Mannheimia succiniciproducens (strain KCTC 0769BP / MBEL55E).